Reading from the N-terminus, the 351-residue chain is F-box protein At1g47810 (351 aa).

One can recognise an F-box domain in the interval 8–54 (LQSLDPIPVDVLFEIFLNLPAKFLARFVCVSKLWAKIIRNQDFIRSF).

The protein is F-box protein At1g47810 of Arabidopsis thaliana (Mouse-ear cress).